The sequence spans 628 residues: Kinesin-like protein subito (628 aa).

Residues 28 to 68 form a disordered region; that stretch reads RFRPRPNKKMRLFDNIQESEEESFSEYSDTESEYKYQSSEA. A compositionally biased stretch (acidic residues) spans 44-58; it reads QESEEESFSEYSDTE. Residues 87–479 form the Kinesin motor domain; that stretch reads GPQVFLRLRP…LNFASIAKNI (393 aa). Residue 169–176 participates in ATP binding; the sequence is GTSGSGKT. The stretch at 509–612 forms a coiled coil; the sequence is DYTKELEDEN…KNPASDTDIS (104 aa). The disordered stretch occupies residues 596–628; it reads KDEIEELKNPASDTDISDDPNESKSPIEILDDD. At Ser-607 the chain carries Phosphoserine. A Phosphothreonine modification is found at Thr-609. At Ser-612 the chain carries Phosphoserine.

It belongs to the TRAFAC class myosin-kinesin ATPase superfamily. Kinesin family.

The protein localises to the cytoplasm. Its subcellular location is the cytoskeleton. Functionally, required during female meiosis for bipolar spindle formation in the absence of the centrosomes and chromosome homolog segregation. Also has roles in male meiosis and mitotic divisions of the early embryo. This Drosophila melanogaster (Fruit fly) protein is Kinesin-like protein subito (sub).